Here is a 357-residue protein sequence, read N- to C-terminus: Arginine kinase (357 aa).

A2 is modified (N-acetylalanine). One can recognise a Phosphagen kinase N-terminal domain in the interval 9-91 (KLEEGFKKLE…FDPIIEDYHK (83 aa)). 64 to 68 (GVGVY) provides a ligand contact to L-arginine. The region spanning 119–356 (FVISTRVRCG…LELIKIEKEM (238 aa)) is the Phosphagen kinase C-terminal domain. ATP contacts are provided by residues 122–126 (STRVR) and H185. Residue E225 participates in L-arginine binding. Position 229 (R229) interacts with ATP. Position 271 (C271) interacts with L-arginine. ATP is bound by residues 280-284 (RASVH) and 309-314 (RGTRGE). Position 314 (E314) interacts with L-arginine.

This sequence belongs to the ATP:guanido phosphotransferase family.

The catalysed reaction is L-arginine + ATP = N(omega)-phospho-L-arginine + ADP + H(+). This is Arginine kinase from Callinectes sapidus (Blue crab).